The primary structure comprises 1499 residues: Multidrug resistance protein CDR2 (1499 aa).

Residues 1–511 (MSTANTSLSQ…NFLRMKGDPS (511 aa)) lie on the Cytoplasmic side of the membrane. The region spanning 148-402 (FTTEAINKLK…FENMGWKCPQ (255 aa)) is the ABC transporter 1 domain. A run of 6 helical transmembrane segments spans residues 512-532 (IPLI…SVFF), 546-566 (GALF…ILSL), 596-616 (LPVK…MVNL), 621-641 (GNFF…SHMF), 660-680 (VFLL…YILG), and 763-783 (FGIT…LTEF). Residues 784–1193 (NKGAMQKGEI…TIVQDWRSPG (410 aa)) are Cytoplasmic-facing. The ABC transporter 2 domain maps to 857-1101 (FFWRDLTYQV…MINYFEKYGA (245 aa)). ATP is bound at residue 893-900 (GASGAGKT). The next 6 helical transmembrane spans lie at 1194-1214 (YIYS…FSFF), 1229-1249 (AVFM…PYFV), 1279-1299 (IPFQ…PVGL), 1315-1335 (LMWM…QLAI), 1354-1374 (LCLM…FWIF), and 1465-1485 (FGIF…FYWL).

Belongs to the ABC transporter superfamily. ABCG family. PDR (TC 3.A.1.205) subfamily.

It is found in the membrane. Its function is as follows. Multidrug efflux transporter. Confers resistance to azole antifungal agents, to other antifungals (terbinafine, amorolfine) and to a variety of metabolic inhibitors. The polypeptide is Multidrug resistance protein CDR2 (CDR2) (Candida albicans (strain SC5314 / ATCC MYA-2876) (Yeast)).